Reading from the N-terminus, the 294-residue chain is Survival motor neuron protein (294 aa).

A compositionally biased stretch (gly residues) spans 1 to 12 (MAMSSGGSGGGV). The disordered stretch occupies residues 1–32 (MAMSSGGSGGGVPEQEDSVLFRRGTGQSDDSD). Ala-2 carries the N-acetylalanine modification. Phosphoserine; by PKA is present on residues Ser-4, Ser-5, and Ser-8. Position 25 is a phosphothreonine (Thr-25). The interval 26 to 51 (GQSDDSDIWDDTALIKAYDKAVASFK) is interacts with GEMIN2. Phosphoserine occurs at positions 28 and 31. Residue Lys-51 forms a Glycyl lysine isopeptide (Lys-Gly) (interchain with G-Cter in SUMO2) linkage. A disordered region spans residues 59 to 88 (ICETSGKPKTTPKRKPAKKNKSQKKNTAAS). Residues 68 to 82 (TTPKRKPAKKNKSQK) are compositionally biased toward basic residues. Thr-69 is subject to Phosphothreonine. Position 85 is a phosphothreonine; by PKA (Thr-85). The Tudor domain occupies 91–151 (QWKVGDKCSA…LSPICEVANN (61 aa)). Residues 97-209 (KCSAIWSEDG…MPGPRLGPGK (113 aa)) are required for interaction with RPP20/POP7. Positions 156 to 166 (AQENENESQVS) are enriched in low complexity. Residues 156 to 222 (AQENENESQV…KFNGPPPPPP (67 aa)) form a disordered region. A Phosphoserine; by PKA modification is found at Ser-187. Over residues 194–204 (LPPPPPMPGPR) the composition is skewed to pro residues. Over residues 206 to 215 (GPGKPGLKFN) the composition is skewed to low complexity. Lys-209 participates in a covalent cross-link: Glycyl lysine isopeptide (Lys-Gly) (interchain with G-Cter in SUMO2). The tract at residues 240-267 (PPIIPPPPPICPDSLDDADALGSMLISW) is P2 (binding site for SNRPB). The segment at 252 to 280 (DSLDDADALGSMLISWYMSGYHTGYYMGF) is involved in homooligomerization. A required for interaction with SYNCRIP region spans residues 279-294 (GFRQNQKEGRCSHSLN).

The protein belongs to the SMN family. Homooligomer; may form higher order homooligomers in the dimer to octamer range. Part of the core SMN complex that contains SMN1, GEMIN2/SIP1, DDX20/GEMIN3, GEMIN4, GEMIN5, GEMIN6, GEMIN7, GEMIN8 and STRAP/UNRIP. Part of the SMN-Sm complex that contains SMN1, GEMIN2/SIP1, DDX20/GEMIN3, GEMIN4, GEMIN5, GEMIN6, GEMIN7, GEMIN8, STRAP/UNRIP and the Sm proteins SNRPB, SNRPD1, SNRPD2, SNRPD3, SNRPE, SNRPF and SNRPG. Component of an import snRNP complex composed of KPNB1, RNUT1, SMN1 and ZNF259. Interacts with DDX20, FBL, NOLA1, RNUT1, SYNCRIP and with several spliceosomal snRNP core Sm proteins, including SNRPB, SNRPD1, SNRPD2, SNRPD3, SNRPE and ILF3. Interacts with GEMIN2; the interaction is direct. Interacts with GEMIN3; the interaction is direct. Interacts with GEMIN8; the interaction is direct. Interacts with SNRPB; the interaction is direct. Interacts (via Tudor domain) with SNRPD1 (via C-terminus); the interaction is direct. Interacts with SNRPD2; the interaction is direct. Interacts (via Tudor domain) with SNRPD3 (via C-terminus); the interaction is direct. Interacts with SNRPE; the interaction is direct. Interacts with OSTF1, LSM10, LSM11 and RPP20/POP7. Interacts (via C-terminal region) with ZPR1 (via C-terminal region). Interacts (via Tudor domain) with COIL. Interacts with SETX; recruits SETX to POLR2A. Interacts with POLR2A (via the C-terminal domain (CTD)). Interacts with PRMT5. Interacts with XRN2. Interacts (via C-terminus) with FMR1 (via C-terminus); the interaction is direct and occurs in a RNA-independent manner. Interacts (via Tudor domain) with SF3B2 ('Arg-508'-methylated form). Interacts with WRAP53/TCAB1. Interacts (via Tudor domain) with ELAVL4 in an RNA-independent manner; the interaction is required for localization of ELAVL4 to RNA granules. Interacts with FRG1. As to quaternary structure, does not homooligomerize. Does not interact with SNRPB. Expressed in a wide variety of tissues. Expressed at high levels in brain, kidney and liver, moderate levels in skeletal and cardiac muscle, and low levels in fibroblasts and lymphocytes. Also seen at high levels in spinal cord. Present in osteoclasts and mononuclear cells (at protein level).

It localises to the nucleus. Its subcellular location is the gem. The protein resides in the cajal body. It is found in the cytoplasm. The protein localises to the cytoplasmic granule. It localises to the perikaryon. Its subcellular location is the cell projection. The protein resides in the neuron projection. It is found in the axon. The protein localises to the myofibril. It localises to the sarcomere. Its subcellular location is the z line. Its function is as follows. The SMN complex catalyzes the assembly of small nuclear ribonucleoproteins (snRNPs), the building blocks of the spliceosome, and thereby plays an important role in the splicing of cellular pre-mRNAs. Most spliceosomal snRNPs contain a common set of Sm proteins SNRPB, SNRPD1, SNRPD2, SNRPD3, SNRPE, SNRPF and SNRPG that assemble in a heptameric protein ring on the Sm site of the small nuclear RNA to form the core snRNP (Sm core). In the cytosol, the Sm proteins SNRPD1, SNRPD2, SNRPE, SNRPF and SNRPG are trapped in an inactive 6S pICln-Sm complex by the chaperone CLNS1A that controls the assembly of the core snRNP. To assemble core snRNPs, the SMN complex accepts the trapped 5Sm proteins from CLNS1A forming an intermediate. Within the SMN complex, SMN1 acts as a structural backbone and together with GEMIN2 it gathers the Sm complex subunits. Binding of snRNA inside 5Sm ultimately triggers eviction of the SMN complex, thereby allowing binding of SNRPD3 and SNRPB to complete assembly of the core snRNP. Ensures the correct splicing of U12 intron-containing genes that may be important for normal motor and proprioceptive neurons development. Also required for resolving RNA-DNA hybrids created by RNA polymerase II, that form R-loop in transcription terminal regions, an important step in proper transcription termination. May also play a role in the metabolism of small nucleolar ribonucleoprotein (snoRNPs). The polypeptide is Survival motor neuron protein (SMN1) (Homo sapiens (Human)).